The sequence spans 139 residues: S-adenosylmethionine decarboxylase proenzyme (139 aa).

Serine 63 (schiff-base intermediate with substrate; via pyruvic acid) is an active-site residue. Serine 63 is modified (pyruvic acid (Ser); by autocatalysis). Histidine 68 (proton acceptor; for processing activity) is an active-site residue. The Proton donor; for catalytic activity role is filled by cysteine 83.

The protein belongs to the prokaryotic AdoMetDC family. Type 1 subfamily. In terms of assembly, heterotetramer of two alpha and two beta chains arranged as a dimer of alpha/beta heterodimers. Pyruvate serves as cofactor. Is synthesized initially as an inactive proenzyme. Formation of the active enzyme involves a self-maturation process in which the active site pyruvoyl group is generated from an internal serine residue via an autocatalytic post-translational modification. Two non-identical subunits are generated from the proenzyme in this reaction, and the pyruvate is formed at the N-terminus of the alpha chain, which is derived from the carboxyl end of the proenzyme. The post-translation cleavage follows an unusual pathway, termed non-hydrolytic serinolysis, in which the side chain hydroxyl group of the serine supplies its oxygen atom to form the C-terminus of the beta chain, while the remainder of the serine residue undergoes an oxidative deamination to produce ammonia and the pyruvoyl group blocking the N-terminus of the alpha chain.

It carries out the reaction S-adenosyl-L-methionine + H(+) = S-adenosyl 3-(methylsulfanyl)propylamine + CO2. It functions in the pathway amine and polyamine biosynthesis; S-adenosylmethioninamine biosynthesis; S-adenosylmethioninamine from S-adenosyl-L-methionine: step 1/1. In terms of biological role, catalyzes the decarboxylation of S-adenosylmethionine to S-adenosylmethioninamine (dcAdoMet), the propylamine donor required for the synthesis of the polyamines spermine and spermidine from the diamine putrescine. This chain is S-adenosylmethionine decarboxylase proenzyme, found in Pyrococcus abyssi (strain GE5 / Orsay).